We begin with the raw amino-acid sequence, 79 residues long: MAGTGVVAVYGEGAMTETKQKSPFSVKVGLAQMLRGGVIMDVVNAEQARIAEEAGACAVMALERVPADIRAQGGVARFC.

This sequence belongs to the PdxS/SNZ family.

The sequence is that of Pyridoxal 5'-phosphate synthase PDX1-like 4 (PDX1L4) from Arabidopsis thaliana (Mouse-ear cress).